The primary structure comprises 94 residues: Histone-like DNA-binding protein (94 aa).

Belongs to the bacterial histone-like protein family.

This chain is Histone-like DNA-binding protein, found in Rickettsia bellii (strain RML369-C).